The primary structure comprises 398 residues: MARNIKVEELLQTPIEKQRIELVERKGIGHPDSISDGLAEAVSRALCREYISKCGTVLHHNTDETQIVAGRSSPKFGGGEVLQPIYMLLVGRATKEFEGVELATESVALQAARNYLRKTMVNMDLERDVIMDCKLGTGSSDLRDVFKRDRVPVANDTSFGVGHAPFSELENIVYNTERRLLTDLKSRMPAIGEDMKVMGLRDGEDIALTICSGMIGKYIDDLDSYINMTQEMKIYVEELATHYTERDVNVYINTGDNLKTSCVFLTVTGTSAEMGDDGSVGRGNRCNGLITPNRPMSMEATSGKNPINHIGKIYNLLSTQMARDIVKQVPEVQDVYIRLLSQIAKPIDQPLVASAQIIPKEGTSFEKVKSEAEVVIDDWLSNVTKITEMVIRGELNTF.

136-141 (GTGSSD) provides a ligand contact to ATP.

Belongs to the AdoMet synthase 2 family. Mg(2+) serves as cofactor.

The enzyme catalyses L-methionine + ATP + H2O = S-adenosyl-L-methionine + phosphate + diphosphate. It participates in amino-acid biosynthesis; S-adenosyl-L-methionine biosynthesis; S-adenosyl-L-methionine from L-methionine: step 1/1. Catalyzes the formation of S-adenosylmethionine from methionine and ATP. This is S-adenosylmethionine synthase from Methanosarcina acetivorans (strain ATCC 35395 / DSM 2834 / JCM 12185 / C2A).